The chain runs to 556 residues: Formate--tetrahydrofolate ligase 2 (556 aa).

T65–S72 is a binding site for ATP.

It belongs to the formate--tetrahydrofolate ligase family.

It catalyses the reaction (6S)-5,6,7,8-tetrahydrofolate + formate + ATP = (6R)-10-formyltetrahydrofolate + ADP + phosphate. It functions in the pathway one-carbon metabolism; tetrahydrofolate interconversion. This is Formate--tetrahydrofolate ligase 2 from Streptococcus sanguinis (strain SK36).